Here is a 159-residue protein sequence, read N- to C-terminus: MNIKIIVVGKLKEKYLKQGIAEYSKRLSKFCKFQIIEVPDEKAPESLSDAQMNEVKVKEGERILGKIKDRDYVFTLEIKGKERSSEELSAEMAKLATYGNSDITFVIGGSLGLSDAVMKRSNSAISFGRFTLPHQLMRLVLTEQIYRSFMIQAGSPYHK.

The S-adenosyl-L-methionine site is built by Leu76 and Gly108.

Belongs to the RNA methyltransferase RlmH family. Homodimer.

The protein resides in the cytoplasm. It carries out the reaction pseudouridine(1915) in 23S rRNA + S-adenosyl-L-methionine = N(3)-methylpseudouridine(1915) in 23S rRNA + S-adenosyl-L-homocysteine + H(+). In terms of biological role, specifically methylates the pseudouridine at position 1915 (m3Psi1915) in 23S rRNA. The protein is Ribosomal RNA large subunit methyltransferase H of Pediococcus pentosaceus (strain ATCC 25745 / CCUG 21536 / LMG 10740 / 183-1w).